Reading from the N-terminus, the 465-residue chain is Siroheme synthase (465 aa).

Residues M1–L203 are precorrin-2 dehydrogenase /sirohydrochlorin ferrochelatase. NAD(+)-binding positions include E22–V23 and P43–Q44. S128 is modified (phosphoserine). The tract at residues G217–A465 is uroporphyrinogen-III C-methyltransferase. Position 226 (P226) interacts with S-adenosyl-L-methionine. Catalysis depends on D249, which acts as the Proton acceptor. K271 acts as the Proton donor in catalysis. Residues G302 to D304, I307, T332 to A333, M384, and G413 contribute to the S-adenosyl-L-methionine site.

In the N-terminal section; belongs to the precorrin-2 dehydrogenase / sirohydrochlorin ferrochelatase family. This sequence in the C-terminal section; belongs to the precorrin methyltransferase family.

The catalysed reaction is uroporphyrinogen III + 2 S-adenosyl-L-methionine = precorrin-2 + 2 S-adenosyl-L-homocysteine + H(+). It catalyses the reaction precorrin-2 + NAD(+) = sirohydrochlorin + NADH + 2 H(+). It carries out the reaction siroheme + 2 H(+) = sirohydrochlorin + Fe(2+). The protein operates within cofactor biosynthesis; adenosylcobalamin biosynthesis; precorrin-2 from uroporphyrinogen III: step 1/1. It participates in cofactor biosynthesis; adenosylcobalamin biosynthesis; sirohydrochlorin from precorrin-2: step 1/1. Its pathway is porphyrin-containing compound metabolism; siroheme biosynthesis; precorrin-2 from uroporphyrinogen III: step 1/1. It functions in the pathway porphyrin-containing compound metabolism; siroheme biosynthesis; siroheme from sirohydrochlorin: step 1/1. The protein operates within porphyrin-containing compound metabolism; siroheme biosynthesis; sirohydrochlorin from precorrin-2: step 1/1. Multifunctional enzyme that catalyzes the SAM-dependent methylations of uroporphyrinogen III at position C-2 and C-7 to form precorrin-2 via precorrin-1. Then it catalyzes the NAD-dependent ring dehydrogenation of precorrin-2 to yield sirohydrochlorin. Finally, it catalyzes the ferrochelation of sirohydrochlorin to yield siroheme. This is Siroheme synthase from Pseudomonas paraeruginosa (strain DSM 24068 / PA7) (Pseudomonas aeruginosa (strain PA7)).